Consider the following 600-residue polypeptide: Aspartate--tRNA(Asp/Asn) ligase (600 aa).

E175 is a binding site for L-aspartate. Residues 199–202 (QLFK) form an aspartate region. R221 is an L-aspartate binding site. Residues 221-223 (RDE) and Q230 contribute to the ATP site. Residue H453 coordinates L-aspartate. Position 487 (E487) interacts with ATP. R494 is an L-aspartate binding site. ATP is bound at residue 539-542 (GWDR). A disordered region spans residues 564–600 (GGVDPLTDAPAPITPLQRKESGIDAKPKAAENKPEEK). Basic and acidic residues predominate over residues 580–600 (QRKESGIDAKPKAAENKPEEK).

Belongs to the class-II aminoacyl-tRNA synthetase family. Type 1 subfamily. In terms of assembly, homodimer.

The protein localises to the cytoplasm. It catalyses the reaction tRNA(Asx) + L-aspartate + ATP = L-aspartyl-tRNA(Asx) + AMP + diphosphate. In terms of biological role, aspartyl-tRNA synthetase with relaxed tRNA specificity since it is able to aspartylate not only its cognate tRNA(Asp) but also tRNA(Asn). Reaction proceeds in two steps: L-aspartate is first activated by ATP to form Asp-AMP and then transferred to the acceptor end of tRNA(Asp/Asn). This chain is Aspartate--tRNA(Asp/Asn) ligase, found in Corynebacterium efficiens (strain DSM 44549 / YS-314 / AJ 12310 / JCM 11189 / NBRC 100395).